Consider the following 219-residue polypeptide: uncharacterized protein (219 aa).

The N-terminal stretch at 1-15 is a signal peptide; it reads MYVLFLLSWVLVAGA. N-linked (GlcNAc...) asparagine glycosylation is present at N118. Positions 138-174 are disordered; that stretch reads GEVGEDPGKRARKRRLGLPIGEPGEDVGKRMRQRQQG.

In terms of tissue distribution, component of the acid-insoluble and acid-soluble organic matrix of calcified layers of the shell (at protein level).

It is found in the secreted. This is an uncharacterized protein from Lottia gigantea (Giant owl limpet).